Consider the following 62-residue polypeptide: Bowman-Birk type proteinase inhibitor (62 aa).

7 disulfides stabilise this stretch: Cys-8-Cys-61, Cys-9-Cys-24, Cys-12-Cys-57, Cys-14-Cys-22, Cys-31-Cys-38, Cys-35-Cys-50, and Cys-40-Cys-48.

Forms a monomer at protein concentrations of below 1 mM. At concentrations of above 2 mM, self-associates.

Inhibits trypsin but not chymotrypsin. Inhibits the trypsin-like proteinase activity present in larvae of the crop pests Adoxophyes orana, Hyphantria cunea, Lobesia botrana and Ostrinia nubilalis. In Medicago scutellata (Snail medic), this protein is Bowman-Birk type proteinase inhibitor.